A 197-amino-acid chain; its full sequence is Phospholipid hydroperoxide glutathione peroxidase (197 aa).

Residue Ser40 is modified to Phosphoserine. Residue Sec73 is part of the active site. Position 73 (Sec73) is a non-standard amino acid, selenocysteine.

The protein belongs to the glutathione peroxidase family. Monomer. Has a tendency to form higher mass oligomers. Interacts with FUNDC1; this interaction promotes GPX4 recruitment into mitochondria through TOM/TIM complex where it is degraded by mitophagy.

The protein localises to the mitochondrion. It localises to the cytoplasm. The catalysed reaction is a hydroperoxy polyunsaturated fatty acid + 2 glutathione = a hydroxy polyunsaturated fatty acid + glutathione disulfide + H2O. The enzyme catalyses 2 glutathione + H2O2 = glutathione disulfide + 2 H2O. It carries out the reaction tert-butyl hydroperoxide + 2 glutathione = tert-butanol + glutathione disulfide + H2O. It catalyses the reaction cumene hydroperoxide + 2 glutathione = 2-phenylpropan-2-ol + glutathione disulfide + H2O. The catalysed reaction is (9S)-hydroperoxy-(10E,12Z)-octadecadienoate + 2 glutathione = (9S)-hydroxy-(10E,12Z)-octadecadienoate + glutathione disulfide + H2O. The enzyme catalyses (13S)-hydroperoxy-(9Z,11E)-octadecadienoate + 2 glutathione = (13S)-hydroxy-(9Z,11E)-octadecadienoate + glutathione disulfide + H2O. It carries out the reaction (5S)-hydroperoxy-(6E,8Z,11Z,14Z)-eicosatetraenoate + 2 glutathione = (5S)-hydroxy-(6E,8Z,11Z,14Z)-eicosatetraenoate + glutathione disulfide + H2O. It catalyses the reaction (12R)-hydroperoxy-(5Z,8Z,10E,14Z)-eicosatetraenoate + 2 glutathione = (12R)-hydroxy-(5Z,8Z,10E,14Z)-eicosatetraenoate + glutathione disulfide + H2O. The catalysed reaction is (12S)-hydroperoxy-(5Z,8Z,10E,14Z)-eicosatetraenoate + 2 glutathione = (12S)-hydroxy-(5Z,8Z,10E,14Z)-eicosatetraenoate + glutathione disulfide + H2O. The enzyme catalyses (15S)-hydroperoxy-(5Z,8Z,11Z,13E)-eicosatetraenoate + 2 glutathione = (15S)-hydroxy-(5Z,8Z,11Z,13E)-eicosatetraenoate + glutathione disulfide + H2O. It carries out the reaction (5S)-hydroperoxy-(6E,8Z,11Z,14Z,17Z)-eicosapentaenoate + 2 glutathione = (5S)-hydroxy-(6E,8Z,11Z,14Z,17Z)-eicosapentaenoate + glutathione disulfide + H2O. It catalyses the reaction (12S)-hydroperoxy-(5Z,8Z,10E,14Z,17Z)-eicosapentaenoate + 2 glutathione = (12S)-hydroxy-(5Z,8Z,10E,14Z,17Z)-eicosapentaenoate + glutathione disulfide + H2O. The catalysed reaction is (15S)-hydroperoxy-(5Z,8Z,11Z,13E,17Z)-eicosapentaenoate + 2 glutathione = (15S)-hydroxy-(5Z,8Z,11Z,13E,17Z)-eicosapentaenoate + glutathione disulfide + H2O. The enzyme catalyses (15S)-hydroperoxy-(11Z,13E)-eicosadienoate + 2 glutathione = (15S)-hydroxy-(11Z,13E)-eicosadienoate + glutathione disulfide + H2O. It carries out the reaction (17S)-hydroperoxy-(4Z,7Z,10Z,13Z,15E,19Z)-docosahexaenoate + 2 glutathione = (17S)-hydroxy-(4Z,7Z,10Z,13Z,15E,19Z)-docosahexaenoate + glutathione disulfide + H2O. It catalyses the reaction a hydroperoxy-1,2-diacyl-glycero-3-phosphocholine + 2 glutathione = a hydroxy-1,2-diacyl-glycero-3-phosphocholine + glutathione disulfide + H2O. Functionally, essential antioxidant peroxidase that directly reduces phospholipid hydroperoxide even if they are incorporated in membranes and lipoproteins. Can also reduce fatty acid hydroperoxide, cholesterol hydroperoxide and thymine hydroperoxide. Plays a key role in protecting cells from oxidative damage by preventing membrane lipid peroxidation. Required to prevent cells from ferroptosis, a non-apoptotic cell death resulting from an iron-dependent accumulation of lipid reactive oxygen species. The presence of selenocysteine (Sec) versus Cys at the active site is essential for life: it provides resistance to overoxidation and prevents cells against ferroptosis. The presence of Sec at the active site is also essential for the survival of a specific type of parvalbumin-positive interneurons, thereby preventing against fatal epileptic seizures. May be required to protect cells from the toxicity of ingested lipid hydroperoxides. Required for normal sperm development and male fertility. Essential for maturation and survival of photoreceptor cells. Plays a role in a primary T-cell response to viral and parasitic infection by protecting T-cells from ferroptosis and by supporting T-cell expansion. Plays a role of glutathione peroxidase in platelets in the arachidonic acid metabolism. Reduces hydroperoxy ester lipids formed by a 15-lipoxygenase that may play a role as down-regulator of the cellular 15-lipoxygenase pathway. Can also reduce small soluble hydroperoxides such as H2O2, cumene hydroperoxide and tert-butyl hydroperoxide. The polypeptide is Phospholipid hydroperoxide glutathione peroxidase (Hylobates lar (Lar gibbon)).